Consider the following 346-residue polypeptide: Probable electron transfer flavoprotein subunit alpha, mitochondrial (346 aa).

FAD is bound at residue 285–313; that stretch reads LYVAVGISGAIQHLAGMKESKMIVAINKD.

Belongs to the ETF alpha-subunit/FixB family. As to quaternary structure, heterodimer of an alpha and a beta subunit. The cofactor is FAD.

It is found in the mitochondrion matrix. The electron transfer flavoprotein serves as a specific electron acceptor for several dehydrogenases, including five acyl-CoA dehydrogenases, glutaryl-CoA and sarcosine dehydrogenase. It transfers the electrons to the main mitochondrial respiratory chain via ETF-ubiquinone oxidoreductase (ETF dehydrogenase). The chain is Probable electron transfer flavoprotein subunit alpha, mitochondrial (ETF1) from Cryptococcus neoformans var. grubii (Filobasidiella neoformans var. grubii).